The sequence spans 1715 residues: Ubiquitin carboxyl-terminal hydrolase 32 (1715 aa).

EF-hand domains lie at 161 to 196 and 197 to 232; these read IPKN…ACRG and PGVE…LLLV. The Ca(2+) site is built by D174, N176, D178, H180, E185, D210, D212, D214, and E221. The region spanning 314-492 is the DUSP domain; sequence QCKHMENDIV…DNLPLPRQVI (179 aa). Residues 393 to 429 are disordered; that stretch reads QHDSYSLGSGTGSASGSGSASSGISAGRHCGPVRPGP. Over residues 408–419 the composition is skewed to low complexity; it reads GSGSASSGISAG. The region spanning 677–1675 is the USP domain; the sequence is TGLHNLGNTC…AAYLLFYERK (999 aa). Residue C686 is the Nucleophile of the active site. Composition is skewed to polar residues over residues 1103 to 1126 and 1150 to 1164; these read TESN…SSLT and YRTS…STGH. 2 disordered regions span residues 1103 to 1213 and 1536 to 1569; these read TESN…PHKA and DEID…GNIL. Positions 1171 to 1180 are enriched in acidic residues; it reads DVDEQAEEGN. Residues 1188-1209 are compositionally biased toward polar residues; it reads DQITTSQPETSSGVYSRRSSQP. Positions 1540 to 1549 are enriched in basic and acidic residues; sequence APSKEVKEEL. Residues 1550–1559 show a composition bias toward polar residues; it reads PNQTGSTKAT. Catalysis depends on H1633, which acts as the Proton acceptor.

The protein belongs to the peptidase C19 family. USP20/USP33 subfamily.

The catalysed reaction is Thiol-dependent hydrolysis of ester, thioester, amide, peptide and isopeptide bonds formed by the C-terminal Gly of ubiquitin (a 76-residue protein attached to proteins as an intracellular targeting signal).. Its function is as follows. Deubiquitinating enzyme that acts as an inhibitor of mitophagy probably by counteracting the action of park. Possibly functions by hydrolyzing ubiquitin attached by park on target proteins, thereby reducing park's ability to drive mitophagy. This chain is Ubiquitin carboxyl-terminal hydrolase 32, found in Drosophila melanogaster (Fruit fly).